The primary structure comprises 488 residues: Probable cytosol aminopeptidase (488 aa).

Mn(2+) contacts are provided by lysine 253 and aspartate 258. Residue lysine 265 is part of the active site. Residues aspartate 276, aspartate 335, and glutamate 337 each coordinate Mn(2+). The active site involves arginine 339.

Belongs to the peptidase M17 family. Requires Mn(2+) as cofactor.

Its subcellular location is the cytoplasm. The catalysed reaction is Release of an N-terminal amino acid, Xaa-|-Yaa-, in which Xaa is preferably Leu, but may be other amino acids including Pro although not Arg or Lys, and Yaa may be Pro. Amino acid amides and methyl esters are also readily hydrolyzed, but rates on arylamides are exceedingly low.. It carries out the reaction Release of an N-terminal amino acid, preferentially leucine, but not glutamic or aspartic acids.. Functionally, presumably involved in the processing and regular turnover of intracellular proteins. Catalyzes the removal of unsubstituted N-terminal amino acids from various peptides. This is Probable cytosol aminopeptidase from Dinoroseobacter shibae (strain DSM 16493 / NCIMB 14021 / DFL 12).